The sequence spans 543 residues: Glutamyl-tRNA(Gln) amidotransferase subunit B-1, chloroplastic/mitochondrial (543 aa).

Residues methionine 1–threonine 47 are disordered. Over residues arginine 12 to arginine 23 the composition is skewed to basic residues.

Belongs to the GatB/GatE family. GatB subfamily. As to quaternary structure, subunit of the heterotrimeric GatCAB amidotransferase (AdT) complex, composed of A, B and C subunits.

It localises to the mitochondrion. The protein localises to the plastid. The protein resides in the chloroplast. It catalyses the reaction L-glutamyl-tRNA(Gln) + L-glutamine + ATP + H2O = L-glutaminyl-tRNA(Gln) + L-glutamate + ADP + phosphate + H(+). In terms of biological role, allows the formation of correctly charged Gln-tRNA(Gln) through the transamidation of misacylated Glu-tRNA(Gln) in chloroplasts and mitochondria. The reaction takes place in the presence of glutamine and ATP through an activated gamma-phospho-Glu-tRNA(Gln). This Micromonas commoda (strain RCC299 / NOUM17 / CCMP2709) (Picoplanktonic green alga) protein is Glutamyl-tRNA(Gln) amidotransferase subunit B-1, chloroplastic/mitochondrial.